The following is a 534-amino-acid chain: Phosphoenolpyruvate carboxykinase (ATP) (534 aa).

Arg-58, Tyr-194, and Lys-200 together coordinate substrate. Residues Lys-200, His-219, and 235 to 243 (GLSGTGKTT) contribute to the ATP site. Mn(2+)-binding residues include Lys-200 and His-219. Asp-256 provides a ligand contact to Mn(2+). Positions 284, 322, and 449 each coordinate ATP. A substrate-binding site is contributed by Arg-322.

The protein belongs to the phosphoenolpyruvate carboxykinase (ATP) family. Mn(2+) is required as a cofactor.

The protein localises to the cytoplasm. The catalysed reaction is oxaloacetate + ATP = phosphoenolpyruvate + ADP + CO2. The protein operates within carbohydrate biosynthesis; gluconeogenesis. In terms of biological role, involved in the gluconeogenesis. Catalyzes the conversion of oxaloacetate (OAA) to phosphoenolpyruvate (PEP) through direct phosphoryl transfer between the nucleoside triphosphate and OAA. This chain is Phosphoenolpyruvate carboxykinase (ATP), found in Novosphingobium aromaticivorans (strain ATCC 700278 / DSM 12444 / CCUG 56034 / CIP 105152 / NBRC 16084 / F199).